Consider the following 278-residue polypeptide: MGIKAYFELIRLNNCLMASFGAFIGGLIASYFNLEMVNNLIFASIVVFLVCGFGNALNDIYDLKIDRINKPERPIPSKRISLTNARIFSYLLVFTGLCISLFNITCFLMAVLNSIVLQQYASTYKKNKIIGNLIVAYLTGSVFIFGGIAVGNIDVTIMLFLCALFAMWSREIIKDYEDIEGDIQEKVISIPIKCGENSIYIAALLLVFAVLLSSLPYLFGFFGIYYLISVVFCDLLFLIGIFPLLINPSRRGAKNASRNIKIVTNLVLVAFVIGSFFK.

A run of 8 helical transmembrane segments spans residues 17–37 (MASF…LEMV), 40–60 (LIFA…LNDI), 91–111 (LLVF…LMAV), 129–149 (IIGN…GGIA), 153–173 (IDVT…REII), 204–224 (LLLV…FFGI), 226–246 (YLIS…PLLI), and 257–277 (SRNI…GSFF).

This sequence belongs to the UbiA prenyltransferase family. DGGGP synthase subfamily. Mg(2+) is required as a cofactor.

It localises to the cell membrane. The enzyme catalyses sn-3-O-(geranylgeranyl)glycerol 1-phosphate + (2E,6E,10E)-geranylgeranyl diphosphate = 2,3-bis-O-(geranylgeranyl)-sn-glycerol 1-phosphate + diphosphate. Its pathway is membrane lipid metabolism; glycerophospholipid metabolism. In terms of biological role, prenyltransferase that catalyzes the transfer of the geranylgeranyl moiety of geranylgeranyl diphosphate (GGPP) to the C2 hydroxyl of (S)-3-O-geranylgeranylglyceryl phosphate (GGGP). This reaction is the second ether-bond-formation step in the biosynthesis of archaeal membrane lipids. The protein is Digeranylgeranylglyceryl phosphate synthase of Methanococcus maripaludis (strain C5 / ATCC BAA-1333).